The sequence spans 330 residues: Atypical chemokine receptor 1 (330 aa).

Residues 1–57 (MGNCLYPVADDNSTKLAIKEDFLIDFPEDYYPDYNETDVEAAAPCHSCSLLNYSSLP) are Extracellular-facing. N12, N35, and N52 each carry an N-linked (GlcNAc...) asparagine glycan. Cystine bridges form between C45/C270 and C123/C189. Residues 58-78 (FFILVSILGILASGTILYALL) form a helical membrane-spanning segment. Topologically, residues 79 to 89 (RPLFRWQLYQD) are cytoplasmic. The helical transmembrane segment at 90 to 110 (RSTLVQLAVGSALFSIVVPIL) threads the bilayer. The Extracellular segment spans residues 111–123 (ARGLSGALITSLC). The chain crosses the membrane as a helical span at residues 124–147 (HLAHLVAYGSAFAQALLIGYHACL). At 148–160 (GPQLGAGQVPGLR) the chain is on the cytoplasmic side. A helical transmembrane segment spans residues 161–181 (LGVTVGLWGVAALLSLPVVLG). Over 182 to 201 (SDTSQGLCTVTFSGEWETLR) the chain is Extracellular. Residues 202-222 (YIHAAACFAIFVLLPLGLLGT) form a helical membrane-spanning segment. Residues 223 to 238 (KGLKTVLGRAPCPWVD) are Cytoplasmic-facing. A helical transmembrane segment spans residues 239–259 (VLWVWFIFWWPQGMTLGLDSL). At 260 to 281 (VRSKAIVVSTCPAQQALDMLLD) the chain is on the extracellular side. Residues 282 to 302 (VAEALAILHCVATPLLLAWVC) traverse the membrane as a helical segment. The Cytoplasmic segment spans residues 303–330 (YQATHTSPPSLPLPTTQTSHLDTLGGKS).

The protein belongs to the G-protein coupled receptor 1 family. Atypical chemokine receptor subfamily.

Its subcellular location is the early endosome. The protein localises to the recycling endosome. The protein resides in the membrane. Functionally, atypical chemokine receptor that controls chemokine levels and localization via high-affinity chemokine binding that is uncoupled from classic ligand-driven signal transduction cascades, resulting instead in chemokine sequestration, degradation, or transcytosis. Also known as interceptor (internalizing receptor) or chemokine-scavenging receptor or chemokine decoy receptor. Has a promiscuous chemokine-binding profile, interacting with inflammatory chemokines of both the CXC and the CC subfamilies but not with homeostatic chemokines. Acts as a receptor for chemokines including CCL2, CCL5, CCL7, CCL11, CCL13, CCL14, CCL17, CXCL5, CXCL6, IL8/CXCL8, CXCL11, GRO, RANTES, MCP-1 and TARC. May regulate chemokine bioavailability and, consequently, leukocyte recruitment through two distinct mechanisms: when expressed in endothelial cells, it sustains the abluminal to luminal transcytosis of tissue-derived chemokines and their subsequent presentation to circulating leukocytes; when expressed in erythrocytes, serves as blood reservoir of cognate chemokines but also as a chemokine sink, buffering potential surges in plasma chemokine levels. The sequence is that of Atypical chemokine receptor 1 (ACKR1) from Bos taurus (Bovine).